The chain runs to 312 residues: Taste receptor type 2 member 103 (312 aa).

Over 1 to 16 (MVVTMRAALRLMLIST) the chain is Extracellular. A helical transmembrane segment spans residues 17–37 (VSLELIIGILANVFIALVNII). At 38-65 (DWIKRGKISAVDKIYMGLAISRTAFVLS) the chain is on the cytoplasmic side. The chain crosses the membrane as a helical span at residues 66-86 (VITGFLIAFLDPASLGIGIMI). At 87-92 (RLLTMS) the chain is on the extracellular side. Residues 93 to 113 (WTVTNHFSVWFATCLSIFYFL) form a helical membrane-spanning segment. The Cytoplasmic segment spans residues 114–133 (KITNFSNTVFLALKWKVKKV). Residues 134–154 (VSVTLVVSLIILFINVIVIHI) traverse the membrane as a helical segment. The Extracellular segment spans residues 155–184 (YTDRFQVNMVQKCGANNTLRAYGLFLSIST). A glycan (N-linked (GlcNAc...) asparagine) is linked at Asn-170. Residues 185-205 (VFTFIPFTASLTMFLLLIFSL) traverse the membrane as a helical segment. The Cytoplasmic portion of the chain corresponds to 206 to 229 (WRHLKTMHHNATGSRDVSTVAHIK). A helical membrane pass occupies residues 230–250 (GLQTVVAFLLLYTVFAMSLFS). The Extracellular portion of the chain corresponds to 251-264 (QSLSIDAQHTNLLS). The chain crosses the membrane as a helical span at residues 265–285 (HFLRCIGVAFPSGHSCALILG). The Cytoplasmic portion of the chain corresponds to 286–312 (NNKLRQASLSVIFWLRCKYKHTENQGP).

It belongs to the G-protein coupled receptor T2R family.

Its subcellular location is the membrane. Functionally, gustducin-coupled receptor implicated in the perception of bitter compounds in the oral cavity and the gastrointestinal tract. Signals through PLCB2 and the calcium-regulated cation channel TRPM5. This Rattus norvegicus (Rat) protein is Taste receptor type 2 member 103.